Consider the following 1399-residue polypeptide: DNA-directed RNA polymerase subunit beta' (1399 aa).

The Zn(2+) site is built by Cys-71, Cys-73, Cys-86, and Cys-89. Mg(2+) contacts are provided by Asp-462, Asp-464, and Asp-466. Residues Cys-810, Cys-884, Cys-891, and Cys-894 each contribute to the Zn(2+) site.

Belongs to the RNA polymerase beta' chain family. As to quaternary structure, the RNAP catalytic core consists of 2 alpha, 1 beta, 1 beta' and 1 omega subunit. When a sigma factor is associated with the core the holoenzyme is formed, which can initiate transcription. The cofactor is Mg(2+). Requires Zn(2+) as cofactor.

The catalysed reaction is RNA(n) + a ribonucleoside 5'-triphosphate = RNA(n+1) + diphosphate. In terms of biological role, DNA-dependent RNA polymerase catalyzes the transcription of DNA into RNA using the four ribonucleoside triphosphates as substrates. The chain is DNA-directed RNA polymerase subunit beta' from Chelativorans sp. (strain BNC1).